Here is a 232-residue protein sequence, read N- to C-terminus: Large ribosomal subunit protein uL1 (232 aa).

The protein belongs to the universal ribosomal protein uL1 family. In terms of assembly, part of the 50S ribosomal subunit.

Its function is as follows. Binds directly to 23S rRNA. The L1 stalk is quite mobile in the ribosome, and is involved in E site tRNA release. Functionally, protein L1 is also a translational repressor protein, it controls the translation of the L11 operon by binding to its mRNA. This Rhizorhabdus wittichii (strain DSM 6014 / CCUG 31198 / JCM 15750 / NBRC 105917 / EY 4224 / RW1) (Sphingomonas wittichii) protein is Large ribosomal subunit protein uL1.